The primary structure comprises 163 residues: Large ribosomal subunit protein uL10 (163 aa).

This sequence belongs to the universal ribosomal protein uL10 family. Part of the ribosomal stalk of the 50S ribosomal subunit. The N-terminus interacts with L11 and the large rRNA to form the base of the stalk. The C-terminus forms an elongated spine to which L12 dimers bind in a sequential fashion forming a multimeric L10(L12)X complex.

Functionally, forms part of the ribosomal stalk, playing a central role in the interaction of the ribosome with GTP-bound translation factors. The sequence is that of Large ribosomal subunit protein uL10 from Blochmanniella pennsylvanica (strain BPEN).